Consider the following 191-residue polypeptide: Ferric nitrobindin-like protein (191 aa).

The GXWXGXG motif lies at 20 to 26 (GNWAGAG).

The protein belongs to the nitrobindin family.

This is Ferric nitrobindin-like protein from Streptomyces avermitilis (strain ATCC 31267 / DSM 46492 / JCM 5070 / NBRC 14893 / NCIMB 12804 / NRRL 8165 / MA-4680).